We begin with the raw amino-acid sequence, 581 residues long: Arginine--tRNA ligase (581 aa).

Residues 126 to 136 (PNLAKEMHVGH) carry the 'HIGH' region motif.

This sequence belongs to the class-I aminoacyl-tRNA synthetase family. As to quaternary structure, monomer.

It localises to the cytoplasm. The enzyme catalyses tRNA(Arg) + L-arginine + ATP = L-arginyl-tRNA(Arg) + AMP + diphosphate. The sequence is that of Arginine--tRNA ligase from Shewanella woodyi (strain ATCC 51908 / MS32).